The sequence spans 272 residues: HMP-PP phosphatase (272 aa).

Asp-8 functions as the Nucleophile in the catalytic mechanism. 3 residues coordinate Mg(2+): Asp-8, Asp-10, and Asp-212.

Belongs to the HAD-like hydrolase superfamily. Cof family. It depends on Mg(2+) as a cofactor.

It catalyses the reaction 4-amino-2-methyl-5-(diphosphooxymethyl)pyrimidine + H2O = 4-amino-2-methyl-5-(phosphooxymethyl)pyrimidine + phosphate + H(+). Functionally, catalyzes the hydrolysis of 4-amino-2-methyl-5-hydroxymethylpyrimidine pyrophosphate (HMP-PP) to 4-amino-2-methyl-5-hydroxymethylpyrimidine phosphate (HMP-P). In Salmonella enteritidis PT4 (strain P125109), this protein is HMP-PP phosphatase.